A 481-amino-acid chain; its full sequence is RAC-beta serine/threonine-protein kinase (481 aa).

Met-1 is modified (N-acetylmethionine). The 104-residue stretch at 5-108 folds into the PH domain; it reads SVIKEGWLHK…WMRAIQMVAN (104 aa). Ser-34 carries the post-translational modification Phosphoserine. Cysteines 60 and 77 form a disulfide. Ser-126 carries the post-translational modification Phosphoserine. Ser-128 and Ser-131 each carry an O-linked (GlcNAc) serine glycan. The Protein kinase domain occupies 152-409; sequence FDYLKLLGKG…AKEVMEHRFF (258 aa). ATP contacts are provided by residues 158–166 and Lys-181; that span reads LGKGTFGKV. Catalysis depends on Asp-275, which acts as the Proton acceptor. 2 residues coordinate Mn(2+): Asn-280 and Asp-293. Cys-297 and Cys-311 are oxidised to a cystine. Thr-306 carries an O-linked (GlcNAc) threonine glycan. Position 309 is a phosphothreonine; by PDPK1 (Thr-309). O-linked (GlcNAc) threonine glycosylation is present at Thr-313. The AGC-kinase C-terminal domain occupies 410 to 481; that stretch reads LSINWQDVVQ…QFSYSASIRE (72 aa). A Phosphoserine modification is found at Ser-447. Residue Thr-451 is modified to Phosphothreonine. Phosphoserine occurs at positions 474 and 478. An O-linked (GlcNAc) serine; alternate glycan is attached at Ser-474.

The protein belongs to the protein kinase superfamily. AGC Ser/Thr protein kinase family. RAC subfamily. Interacts with BTBD10. Interacts with KCTD20. Interacts (via PH domain) with MTCP1, TCL1A and TCL1B; this interaction may facilitate AKT2 oligomerization and phosphorylation, hence increasing kinase activity. Interacts with PHB2; this interaction may be important for myogenic differentiation. Interacts (when phosphorylated) with CLIP3/ClipR-59; this interaction promotes AKT2 recruitment to the plasma membrane. Interacts with WDFY2/ProF (via WD repeats 1-3). Phosphorylation on Thr-309 and Ser-474 is required for full activity. Phosphorylation of the activation loop at Thr-309 by PDPK1/PDK1 is a prerequisite for full activation. Phosphorylated and activated by PDPK1/PDK1 in the presence of phosphatidylinositol 3,4,5-trisphosphate. Phosphorylation by mTORC2 in response to growth factors plays a key role in AKT1 activation: mTORC2 phosphorylates different sites depending on the context, such as Ser-474 or Ser-478, thereby facilitating subsequent phosphorylation of the activation loop by PDPK1/PDK1. In terms of processing, ubiquitinated; undergoes both 'Lys-48'- and 'Lys-63'-linked polyubiquitination. TRAF6 catalyzes 'Lys-63'-linked AKT2 ubiquitination; this modification may be important for AKT2 recruitment to the plasma membrane and for AKT2 activating phosphorylation. When phosphorylated, undergoes 'Lys-48'-polyubiquitination catalyzed by TTC3 in the nucleus, leading to its degradation by the proteasome. Post-translationally, O-GlcNAcylation at Thr-306 and Thr-313 inhibits activating phosphorylation at Thr-309 via the disruption of the interaction between AKT and PDPK1/PDK1. Widely expressed. Expressed in myoblasts.

Its subcellular location is the cytoplasm. The protein localises to the nucleus. The protein resides in the cell membrane. It localises to the early endosome. It carries out the reaction L-seryl-[protein] + ATP = O-phospho-L-seryl-[protein] + ADP + H(+). It catalyses the reaction L-threonyl-[protein] + ATP = O-phospho-L-threonyl-[protein] + ADP + H(+). Its activity is regulated as follows. Phosphorylation at Thr-309 (in the kinase domain) and Ser-474 (in the C-terminal regulatory region) is required for full activation. In adipocytes and hepatocytes, the activation is induced by insulin. Aminofurazans, such as 4-[2-(4-amino-2,5-dihydro-1,2,5-oxadiazol-3-yl)-6-{[(1S)-3-amino-1-phenylpropyl]oxy}-1-ethyl-1H-imidazo[4,5-c]pyridin-4-yl]-2-methylbut-3-yn-2-ol (compound 32), are potent AKT2 inhibitors. AKT2 phosphorylation of PKP1 is induced by insulin. Functionally, serine/threonine kinase closely related to AKT1 and AKT3. All 3 enzymes, AKT1, AKT2 and AKT3, are collectively known as AKT kinase. AKT regulates many processes including metabolism, proliferation, cell survival, growth and angiogenesis, through the phosphorylation of a range of downstream substrates. Over 100 substrates have been reported so far, although for most of them, the precise AKT kinase catalyzing the reaction was not specified. AKT regulates glucose uptake by mediating insulin-induced translocation of the SLC2A4/GLUT4 glucose transporter to the cell surface. Phosphorylation of PTPN1 at 'Ser-50' negatively modulates its phosphatase activity preventing dephosphorylation of the insulin receptor and the attenuation of insulin signaling. Phosphorylation of TBC1D4 triggers the binding of this effector to inhibitory 14-3-3 proteins, which is required for insulin-stimulated glucose transport. AKT also regulates the storage of glucose in the form of glycogen by phosphorylating GSK3A at 'Ser-21' and GSK3B at 'Ser-9', resulting in inhibition of its kinase activity. Phosphorylation of GSK3 isoforms by AKT is also thought to be one mechanism by which cell proliferation is driven. AKT also regulates cell survival via the phosphorylation of MAP3K5 (apoptosis signal-related kinase). Phosphorylation of 'Ser-83' decreases MAP3K5 kinase activity stimulated by oxidative stress and thereby prevents apoptosis. AKT mediates insulin-stimulated protein synthesis by phosphorylating TSC2 at 'Ser-939' and 'Thr-1462', thereby activating mTORC1 signaling and leading to both phosphorylation of 4E-BP1 and in activation of RPS6KB1. AKT is involved in the phosphorylation of members of the FOXO factors (Forkhead family of transcription factors), leading to binding of 14-3-3 proteins and cytoplasmic localization. In particular, FOXO1 is phosphorylated at 'Thr-24', 'Ser-256' and 'Ser-319'. FOXO3 and FOXO4 are phosphorylated on equivalent sites. AKT has an important role in the regulation of NF-kappa-B-dependent gene transcription and positively regulates the activity of CREB1 (cyclic AMP (cAMP)-response element binding protein). The phosphorylation of CREB1 induces the binding of accessory proteins that are necessary for the transcription of pro-survival genes such as BCL2 and MCL1. AKT phosphorylates 'Ser-454' on ATP citrate lyase (ACLY), thereby potentially regulating ACLY activity and fatty acid synthesis. Activates the 3B isoform of cyclic nucleotide phosphodiesterase (PDE3B) via phosphorylation of 'Ser-273', resulting in reduced cyclic AMP levels and inhibition of lipolysis. Phosphorylates PIKFYVE on 'Ser-318', which results in increased PI(3)P-5 activity. The Rho GTPase-activating protein DLC1 is another substrate and its phosphorylation is implicated in the regulation cell proliferation and cell growth. AKT plays a role as key modulator of the AKT-mTOR signaling pathway controlling the tempo of the process of newborn neurons integration during adult neurogenesis, including correct neuron positioning, dendritic development and synapse formation. Signals downstream of phosphatidylinositol 3-kinase (PI(3)K) to mediate the effects of various growth factors such as platelet-derived growth factor (PDGF), epidermal growth factor (EGF), insulin and insulin-like growth factor 1 (IGF1). AKT mediates the antiapoptotic effects of IGF1. Essential for the SPATA13-mediated regulation of cell migration and adhesion assembly and disassembly. May be involved in the regulation of the placental development. In response to lysophosphatidic acid stimulation, inhibits the ciliogenesis cascade. In this context, phosphorylates WDR44, hence stabilizing its interaction with Rab11 and preventing the formation of the ciliogenic Rab11-FIP3-RAB3IP complex. Also phosphorylates RAB3IP/Rabin8, thus may affect RAB3IP guanine nucleotide exchange factor (GEF) activity toward Rab8, which is important for cilia growth. Phosphorylates PKP1, facilitating its interaction with YWHAG and translocation to the nucleus, ultimately resulting in a reduction in keratinocyte intercellular adhesion. Phosphorylation of PKP1 increases PKP1 protein stability, translocation to the cytoplasm away from desmosome plaques and PKP1-driven cap-dependent translation. Several AKT2-specific substrates have been identified, including ANKRD2, C2CD5, CLK2 and PITX2. May play a role in myoblast differentiation. In this context, may act through PITX2 phosphorylation. Unphosphorylated PITX2 associates with an ELAVL1/HuR-containing complex, which stabilizes CCND1 cyclin mRNA, ensuring cell proliferation. Phosphorylation by AKT2 impairs this association, leading to CCND1 mRNA destabilization and progression towards differentiation. Also involved in the negative regulation of myogenesis in response to stress conditions. In this context, acts by phosphorylating ANKRD2. May also be a key regulator of glucose uptake. Regulates insulin-stimulated glucose transport by the increase of glucose transporter GLUT4 translocation from intracellular stores to the plasma membrane. In this context, acts by phosphorylating C2CD5/CDP138 on 'Ser-197' in insulin-stimulated adipocytes. Through the phosphorylation of CLK2 on 'Thr-343', involved in insulin-regulated suppression of hepatic gluconeogenesis. The protein is RAC-beta serine/threonine-protein kinase of Homo sapiens (Human).